The sequence spans 450 residues: MPRRYYITTFGCQMNKADSERMAGILEAMGLELAAEPDEADVLLYNTCTIRDNAEQKLYSYLGRQAKRKHQDPNLTLIVAGCVAQQEGEQLLRRVPEVDLVMGPQYANRLGELLEQVWNGSQVVATEPLQIVEDITKPRRDSTVTAWVNVIYGCNERCTYCVVPGVRGQEQSRRPEAIRAEIEELAAQGYKEVTLLGQNIDAYGRDLPGITPEGRRQHTFTDLLYYIHDVAGIERIRFATSHPRYFTERLIRACAELPKVCKHFHIPFQSGDNEILKAMARGYTRERYLHIIETIRRYMPDAAISADAIVGFPGETEEQFQRTLDLVAAVGFDQLNTAAYSPRPNTPAATWENQVPEAIKEDRLQRLNHLVAKIAGDRSQRYLGREEVVLVEGVNPKDAQQVYGRTDGNRLTYLPGDIETLRGQLVRVRITEARAFSLSGVPLAASSLVC.

Residues 3 to 119 (RRYYITTFGC…LGELLEQVWN (117 aa)) enclose the MTTase N-terminal domain. 6 residues coordinate [4Fe-4S] cluster: cysteine 12, cysteine 48, cysteine 82, cysteine 154, cysteine 158, and cysteine 161. In terms of domain architecture, Radical SAM core spans 140–377 (RDSTVTAWVN…NHLVAKIAGD (238 aa)). The TRAM domain occupies 380–444 (QRYLGREEVV…AFSLSGVPLA (65 aa)).

This sequence belongs to the methylthiotransferase family. MiaB subfamily. Monomer. It depends on [4Fe-4S] cluster as a cofactor.

The protein resides in the cytoplasm. The enzyme catalyses N(6)-dimethylallyladenosine(37) in tRNA + (sulfur carrier)-SH + AH2 + 2 S-adenosyl-L-methionine = 2-methylsulfanyl-N(6)-dimethylallyladenosine(37) in tRNA + (sulfur carrier)-H + 5'-deoxyadenosine + L-methionine + A + S-adenosyl-L-homocysteine + 2 H(+). Functionally, catalyzes the methylthiolation of N6-(dimethylallyl)adenosine (i(6)A), leading to the formation of 2-methylthio-N6-(dimethylallyl)adenosine (ms(2)i(6)A) at position 37 in tRNAs that read codons beginning with uridine. This Thermosynechococcus vestitus (strain NIES-2133 / IAM M-273 / BP-1) protein is tRNA-2-methylthio-N(6)-dimethylallyladenosine synthase.